A 358-amino-acid chain; its full sequence is Alanine racemase (358 aa).

Lys35 functions as the Proton acceptor; specific for D-alanine in the catalytic mechanism. The residue at position 35 (Lys35) is an N6-(pyridoxal phosphate)lysine. Arg130 contacts substrate. The active-site Proton acceptor; specific for L-alanine is the Tyr255. Met303 is a binding site for substrate.

This sequence belongs to the alanine racemase family. It depends on pyridoxal 5'-phosphate as a cofactor.

The enzyme catalyses L-alanine = D-alanine. Its pathway is amino-acid biosynthesis; D-alanine biosynthesis; D-alanine from L-alanine: step 1/1. Functionally, catalyzes the interconversion of L-alanine and D-alanine. May also act on other amino acids. The sequence is that of Alanine racemase (alr) from Shewanella baltica (strain OS195).